The primary structure comprises 382 residues: uncharacterized protein (382 aa).

Helical transmembrane passes span 8–28 (VLLL…LNTL), 41–61 (WQVG…TLIA), 73–93 (SYHY…LSVD), 94–114 (FWSW…IWVI), 133–153 (AAYM…LGVV), 157–177 (LLSV…PLLF), 208–228 (GCII…LYLS), 235–255 (ASVG…QWPI), 274–294 (VVIL…ALFI), 295–315 (LGCA…EKVS), 325–345 (ALLM…SLLM), and 349–369 (SDNL…MMLL).

It belongs to the major facilitator superfamily. YcaD (TC 2.A.1.26) family.

It is found in the cell inner membrane. This is an uncharacterized protein from Yersinia enterocolitica serotype O:8 / biotype 1B (strain NCTC 13174 / 8081).